The chain runs to 510 residues: Protein phosphatase EYA3 (510 aa).

2 disordered regions span residues Met-1–Ser-32 and Tyr-175–Ser-233. Polar residues predominate over residues Gln-7–Asp-16. The span at Leu-192–Ser-203 shows a compositional bias: low complexity. Residues Ser-199 and Ser-203 each carry the phosphoserine modification. The active-site Nucleophile is Asp-246. Asp-246 and Asp-248 together coordinate Mg(2+). Catalysis depends on Asp-248, which acts as the Proton donor. Ser-375 and Ser-409 each carry phosphoserine. Mg(2+) is bound at residue Asp-474.

This sequence belongs to the HAD-like hydrolase superfamily. EYA family. In terms of assembly, interacts with SIX1 and DACH1, and probably SIX2, SIX4 and SIX5. Mg(2+) is required as a cofactor. Post-translationally, ser-203 phosphorylation is required for localization at sites of DNA damage and directing interaction with H2AX. In terms of tissue distribution, expressed in branchial arches, CNS and developing eye.

The protein resides in the cytoplasm. Its subcellular location is the nucleus. It catalyses the reaction O-phospho-L-tyrosyl-[protein] + H2O = L-tyrosyl-[protein] + phosphate. Functionally, tyrosine phosphatase that specifically dephosphorylates 'Tyr-142' of histone H2AX (H2AXY142ph). 'Tyr-142' phosphorylation of histone H2AX plays a central role in DNA repair and acts as a mark that distinguishes between apoptotic and repair responses to genotoxic stress. Promotes efficient DNA repair by dephosphorylating H2AX, promoting the recruitment of DNA repair complexes containing MDC1. Its function as histone phosphatase probably explains its role in transcription regulation during organogenesis. The phosphatase activity has been shown in vitro. Coactivates SIX1. Seems to coactivate SIX2, SIX4 and SIX5. The repression of precursor cell proliferation in myoblasts by SIX1 is switched to activation through recruitment of EYA3 to the SIX1-DACH1 complex and seems to be dependent on EYA3 phosphatase activity. May be involved in development of the eye. May play a role in mediating the induction and differentiation of cranial placodes. The protein is Protein phosphatase EYA3 (Eya3) of Mus musculus (Mouse).